A 734-amino-acid polypeptide reads, in one-letter code: Photosystem I P700 chlorophyll a apoprotein A2 (734 aa).

The next 8 helical transmembrane spans lie at 46–69, 135–158, 175–199, 273–291, 330–353, 369–395, 417–439, and 517–535; these read IFAS…FHVA, LYSG…LHLQ, LNHH…HVAI, MAHH…GHMY, LHFQ…QHMY, AALY…IFFI, AIIS…LYVH, and FLVH…LILV. [4Fe-4S] cluster-binding residues include Cys559 and Cys568. A run of 2 helical transmembrane segments spans residues 575–596 and 643–665; these read AFYL…YWHW and LSVW…MFLI. Chlorophyll a-binding residues include His654, Met662, and Tyr670. Residue Trp671 coordinates phylloquinone. Residues 707-727 form a helical membrane-spanning segment; it reads LVGLAHFSVGYIFTYAAFLIA.

It belongs to the PsaA/PsaB family. As to quaternary structure, the PsaA/B heterodimer binds the P700 chlorophyll special pair and subsequent electron acceptors. PSI consists of a core antenna complex that captures photons, and an electron transfer chain that converts photonic excitation into a charge separation. The eukaryotic PSI reaction center is composed of at least 11 subunits. Requires P700 is a chlorophyll a/chlorophyll a' dimer, A0 is one or more chlorophyll a, A1 is one or both phylloquinones and FX is a shared 4Fe-4S iron-sulfur center. as cofactor.

The protein localises to the plastid. It is found in the chloroplast thylakoid membrane. It catalyses the reaction reduced [plastocyanin] + hnu + oxidized [2Fe-2S]-[ferredoxin] = oxidized [plastocyanin] + reduced [2Fe-2S]-[ferredoxin]. In terms of biological role, psaA and PsaB bind P700, the primary electron donor of photosystem I (PSI), as well as the electron acceptors A0, A1 and FX. PSI is a plastocyanin-ferredoxin oxidoreductase, converting photonic excitation into a charge separation, which transfers an electron from the donor P700 chlorophyll pair to the spectroscopically characterized acceptors A0, A1, FX, FA and FB in turn. Oxidized P700 is reduced on the lumenal side of the thylakoid membrane by plastocyanin. This Antirrhinum majus (Garden snapdragon) protein is Photosystem I P700 chlorophyll a apoprotein A2.